The chain runs to 278 residues: Aquaporin NIP3-3 (278 aa).

2 helical membrane passes run 70 to 90 and 99 to 119; these read VSAEFFGTFILIFTVLSTIIM and TLLGIATSAGLAVTVLVLSLI. Positions 127 to 129 match the NPA 1 motif; that stretch reads NPA. A run of 3 helical transmembrane segments spans residues 141–163, 185–205, and 213–233; these read PSAHLLPYISSQILGAVAASFAV, AFFVEFIITFFLLFIITALAT, and LIAVAVGATVMMNILVAGPST. An NPA 2 motif is present at residues 238–240; the sequence is NPA. The helical transmembrane segment at 255-275 threads the bilayer; it reads IWVYLVATPLGAIAGTGAYVA.

Belongs to the MIP/aquaporin (TC 1.A.8) family. NIP (TC 1.A.8.12) subfamily. As to expression, expressed in leaves and at lower levels in roots and anthers.

It localises to the membrane. Its function is as follows. Aquaporins facilitate the transport of water and small neutral solutes across cell membranes. This is Aquaporin NIP3-3 (NIP3-3) from Oryza sativa subsp. japonica (Rice).